The sequence spans 189 residues: Protein GrpE (189 aa).

The span at 1–10 (MADEQQQTLD) shows a compositional bias: polar residues. A disordered region spans residues 1-21 (MADEQQQTLDPQAPEQTDAPE).

It belongs to the GrpE family. In terms of assembly, homodimer.

It is found in the cytoplasm. In terms of biological role, participates actively in the response to hyperosmotic and heat shock by preventing the aggregation of stress-denatured proteins, in association with DnaK and GrpE. It is the nucleotide exchange factor for DnaK and may function as a thermosensor. Unfolded proteins bind initially to DnaJ; upon interaction with the DnaJ-bound protein, DnaK hydrolyzes its bound ATP, resulting in the formation of a stable complex. GrpE releases ADP from DnaK; ATP binding to DnaK triggers the release of the substrate protein, thus completing the reaction cycle. Several rounds of ATP-dependent interactions between DnaJ, DnaK and GrpE are required for fully efficient folding. This is Protein GrpE from Pseudomonas paraeruginosa (strain DSM 24068 / PA7) (Pseudomonas aeruginosa (strain PA7)).